The primary structure comprises 238 residues: Large ribosomal subunit protein uL2 (238 aa).

Positions 1-11 are enriched in polar residues; it reads MGKRLISQNRG. 2 disordered regions span residues 1–22 and 202–223; these read MGKR…APSH and FGGG…APPG.

The protein belongs to the universal ribosomal protein uL2 family. As to quaternary structure, part of the 50S ribosomal subunit. Forms a bridge to the 30S subunit in the 70S ribosome.

One of the primary rRNA binding proteins. Required for association of the 30S and 50S subunits to form the 70S ribosome, for tRNA binding and peptide bond formation. It has been suggested to have peptidyltransferase activity; this is somewhat controversial. Makes several contacts with the 16S rRNA in the 70S ribosome. The sequence is that of Large ribosomal subunit protein uL2 from Methanosarcina acetivorans (strain ATCC 35395 / DSM 2834 / JCM 12185 / C2A).